Here is a 347-residue protein sequence, read N- to C-terminus: NADH-ubiquinone oxidoreductase chain 2 (347 aa).

A run of 11 helical transmembrane segments spans residues 3–23 (PPIL…VLTS), 25–45 (HWLL…PILM), 60–80 (FLTQ…NLMF), 96–116 (GLVT…FWVP), 122–142 (ISLS…LSVL), 153–173 (LLIT…LNQT), 178–198 (ILAY…TYNP), 200–220 (LMVL…MLFM), 237–257 (LPLM…LPPL), 274–294 (DMII…YFYM), and 323–343 (IILL…TPMM).

This sequence belongs to the complex I subunit 2 family. In terms of assembly, core subunit of respiratory chain NADH dehydrogenase (Complex I) which is composed of 45 different subunits. Interacts with TMEM242.

It localises to the mitochondrion inner membrane. The enzyme catalyses a ubiquinone + NADH + 5 H(+)(in) = a ubiquinol + NAD(+) + 4 H(+)(out). Its function is as follows. Core subunit of the mitochondrial membrane respiratory chain NADH dehydrogenase (Complex I) which catalyzes electron transfer from NADH through the respiratory chain, using ubiquinone as an electron acceptor. Essential for the catalytic activity and assembly of complex I. This chain is NADH-ubiquinone oxidoreductase chain 2, found in Phoca vitulina (Harbor seal).